The primary structure comprises 280 residues: B3 domain-containing protein At5g25470 (280 aa).

The TF-B3 1 DNA-binding region spans 20–114; the sequence is WKSLSPGQNW…FLEVQIFKND (95 aa). Residues 122 to 153 are disordered; sequence PPEVEPETEPFHPTTPKNSHKETTTASASASA. Positions 183–276 form a DNA-binding region, TF-B3 2; that stretch reads YFVKTLTKGN…ELVTAVRVHF (94 aa).

It localises to the nucleus. This chain is B3 domain-containing protein At5g25470, found in Arabidopsis thaliana (Mouse-ear cress).